We begin with the raw amino-acid sequence, 411 residues long: Glucose-1-phosphate adenylyltransferase (411 aa).

Residues glycine 161, 176-177 (EK), and serine 195 contribute to the alpha-D-glucose 1-phosphate site.

Belongs to the bacterial/plant glucose-1-phosphate adenylyltransferase family. As to quaternary structure, homotetramer.

The enzyme catalyses alpha-D-glucose 1-phosphate + ATP + H(+) = ADP-alpha-D-glucose + diphosphate. Its pathway is glycan biosynthesis; glycogen biosynthesis. Its function is as follows. Involved in the biosynthesis of ADP-glucose, a building block required for the elongation reactions to produce glycogen. Catalyzes the reaction between ATP and alpha-D-glucose 1-phosphate (G1P) to produce pyrophosphate and ADP-Glc. The protein is Glucose-1-phosphate adenylyltransferase of Anaeromyxobacter sp. (strain Fw109-5).